Consider the following 419-residue polypeptide: Pyrrolysine--tRNA ligase (419 aa).

A disordered region spans residues 100-157; sequence APKVKKAMPKSVSRAPKPLENSVSAKASTNTSRSVPSPAKSTPNSSVPASAPAPSLTR. Residues 120-141 are compositionally biased toward polar residues; that stretch reads NSVSAKASTNTSRSVPSPAKST. A compositionally biased stretch (low complexity) spans 142–154; that stretch reads PNSSVPASAPAPS.

It belongs to the class-II aminoacyl-tRNA synthetase family.

It localises to the cytoplasm. The enzyme catalyses tRNA(Pyl) + L-pyrrolysine + ATP = L-pyrrolysyl-tRNA(Pyl) + AMP + diphosphate. In terms of biological role, catalyzes the attachment of pyrrolysine to tRNA(Pyl). Pyrrolysine is a lysine derivative encoded by the termination codon UAG. This Methanosarcina barkeri protein is Pyrrolysine--tRNA ligase (pylS).